A 328-amino-acid chain; its full sequence is D-cysteine desulfhydrase (328 aa).

K51 bears the N6-(pyridoxal phosphate)lysine mark.

It belongs to the ACC deaminase/D-cysteine desulfhydrase family. Homodimer. Pyridoxal 5'-phosphate serves as cofactor.

The catalysed reaction is D-cysteine + H2O = hydrogen sulfide + pyruvate + NH4(+) + H(+). In terms of biological role, catalyzes the alpha,beta-elimination reaction of D-cysteine and of several D-cysteine derivatives. It could be a defense mechanism against D-cysteine. The sequence is that of D-cysteine desulfhydrase from Salmonella typhimurium (strain LT2 / SGSC1412 / ATCC 700720).